A 1549-amino-acid chain; its full sequence is Structural maintenance of chromosomes protein 4 (1549 aa).

Residues 1 to 78 (MPPKTSAAPP…LFSLQLPSRP (78 aa)) form a disordered region. A compositionally biased stretch (basic residues) spans 26–36 (KPQKKTTKPVN). The segment covering 37–59 (RHKEGSKDPEEELQRAVNEKFDG) has biased composition (basic and acidic residues). 121–128 (GPNGSGKS) lines the ATP pocket. Residues 326-604 (MKLEQRRRQR…QNSSCSSSNK (279 aa)) are a coiled coil. 2 stretches are compositionally biased toward basic and acidic residues: residues 396-407 (LSDLGTEETRRK) and 420-444 (AEAE…AERK). 2 disordered regions span residues 396-444 (LSDL…AERK) and 460-485 (KTAN…EEQK). Residues 619–734 (KSFHGRLGDL…GDSTQEAQRM (116 aa)) form the SMC hinge domain. Coiled-coil stretches lie at residues 786 to 1058 (KAAE…KVNR) and 1144 to 1182 (EKIN…SIKA). Polar residues predominate over residues 1440 to 1459 (IQTTRDVTSRPQSKATTSGD). The tract at residues 1440–1549 (IQTTRDVTSR…AIVDDDDDME (110 aa)) is disordered. Over residues 1460-1474 (GTERPASRSASRPES) the composition is skewed to basic and acidic residues. Residues 1510 to 1523 (TPPSKRSNSASTPK) show a composition bias toward polar residues.

Belongs to the SMC family. SMC4 subfamily. In terms of assembly, component of the condensin I complex, which contains the mix-1/SMC2 and smc-4/SMC4 heterodimer, and three non SMC subunits that probably regulate the complex: dpy-26, capg-1 and dpy-28. Within the complex, interacts with mix-1, dpy-26, capg-1 and dpy-28. Component of the condensin II complex, which contains the mix-1/SMC2 and smc-4/SMC4 heterodimer, and three non SMC subunits, kle-2, capg-2 and hcp-6 that probably regulate the complex. Within the complex, interacts with mix-1, kle-2, capg-2 and hcp-6. Interacts with smcl-1.

It is found in the nucleus. The protein resides in the chromosome. Central component of the condensin I complex, a complex required for conversion of interphase chromatin into mitotic-like condense chromosomes. The condensin I complex introduces positive supercoils into relaxed DNA in the presence of type I topoisomerases. Converts nicked DNA into positive knotted forms in the presence of type II topoisomerases. Also a central component of the condensin II complex, a complex that seems to play a role in prophase chromosome condensation. Both the condensin complex I and II play a role in meiotic and mitotic chromosome segregation. Plays a role in robust cytokinesis upon the presence of chromatin obstructions. The protein is Structural maintenance of chromosomes protein 4 (smc-4) of Caenorhabditis elegans.